A 490-amino-acid polypeptide reads, in one-letter code: Betaine aldehyde dehydrogenase (490 aa).

Asp-93 is a K(+) binding site. NAD(+) is bound at residue 150–152; sequence GAW. Residue Lys-162 is the Charge relay system of the active site. 176 to 179 is a binding site for NAD(+); sequence KPSE. K(+) is bound at residue Val-180. NAD(+) is bound at residue 230–233; the sequence is GIAS. Position 246 (Leu-246) interacts with K(+). Glu-252 functions as the Proton acceptor in the catalytic mechanism. Positions 254, 286, and 387 each coordinate NAD(+). Cys-286 acts as the Nucleophile in catalysis. Cysteine sulfenic acid (-SOH) is present on Cys-286. Positions 457 and 460 each coordinate K(+). Glu-464 acts as the Charge relay system in catalysis.

Belongs to the aldehyde dehydrogenase family. In terms of assembly, dimer of dimers. Requires K(+) as cofactor.

It catalyses the reaction betaine aldehyde + NAD(+) + H2O = glycine betaine + NADH + 2 H(+). Its pathway is amine and polyamine biosynthesis; betaine biosynthesis via choline pathway; betaine from betaine aldehyde: step 1/1. In terms of biological role, involved in the biosynthesis of the osmoprotectant glycine betaine. Catalyzes the irreversible oxidation of betaine aldehyde to the corresponding acid. The protein is Betaine aldehyde dehydrogenase of Yersinia pseudotuberculosis serotype IB (strain PB1/+).